The following is a 75-amino-acid chain: Large ribosomal subunit protein bL31 (75 aa).

The Zn(2+) site is built by cysteine 16, cysteine 18, cysteine 38, and cysteine 41.

It belongs to the bacterial ribosomal protein bL31 family. Type A subfamily. Part of the 50S ribosomal subunit. It depends on Zn(2+) as a cofactor.

In terms of biological role, binds the 23S rRNA. The chain is Large ribosomal subunit protein bL31 from Nocardioides sp. (strain ATCC BAA-499 / JS614).